Reading from the N-terminus, the 170-residue chain is Adenine phosphoribosyltransferase (170 aa).

It belongs to the purine/pyrimidine phosphoribosyltransferase family. As to quaternary structure, homodimer.

Its subcellular location is the cytoplasm. The catalysed reaction is AMP + diphosphate = 5-phospho-alpha-D-ribose 1-diphosphate + adenine. It participates in purine metabolism; AMP biosynthesis via salvage pathway; AMP from adenine: step 1/1. Catalyzes a salvage reaction resulting in the formation of AMP, that is energically less costly than de novo synthesis. This chain is Adenine phosphoribosyltransferase, found in Bacillus anthracis (strain A0248).